We begin with the raw amino-acid sequence, 94 residues long: Large ribosomal subunit protein uL23 (94 aa).

This sequence belongs to the universal ribosomal protein uL23 family. As to quaternary structure, part of the 50S ribosomal subunit. Contacts protein L29, and trigger factor when it is bound to the ribosome.

Its function is as follows. One of the early assembly proteins it binds 23S rRNA. One of the proteins that surrounds the polypeptide exit tunnel on the outside of the ribosome. Forms the main docking site for trigger factor binding to the ribosome. In Geobacter metallireducens (strain ATCC 53774 / DSM 7210 / GS-15), this protein is Large ribosomal subunit protein uL23.